Reading from the N-terminus, the 93-residue chain is Acylphosphatase (93 aa).

The region spanning 7 to 93 (RLTAWVHGRV…ADAIAGFTER (87 aa)) is the Acylphosphatase-like domain. Catalysis depends on residues Arg-22 and Asn-40.

This sequence belongs to the acylphosphatase family.

The enzyme catalyses an acyl phosphate + H2O = a carboxylate + phosphate + H(+). This Mycolicibacterium vanbaalenii (strain DSM 7251 / JCM 13017 / BCRC 16820 / KCTC 9966 / NRRL B-24157 / PYR-1) (Mycobacterium vanbaalenii) protein is Acylphosphatase (acyP).